The sequence spans 916 residues: Protein translocase subunit SecA (916 aa).

Residues Gln87, 105–109 (GEGKT), and Asp507 contribute to the ATP site. Residues Cys900, Cys902, Cys911, and His912 each coordinate Zn(2+).

This sequence belongs to the SecA family. As to quaternary structure, monomer and homodimer. Part of the essential Sec protein translocation apparatus which comprises SecA, SecYEG and auxiliary proteins SecDF-YajC and YidC. The cofactor is Zn(2+).

It localises to the cell inner membrane. It is found in the cytoplasm. The enzyme catalyses ATP + H2O + cellular proteinSide 1 = ADP + phosphate + cellular proteinSide 2.. In terms of biological role, part of the Sec protein translocase complex. Interacts with the SecYEG preprotein conducting channel. Has a central role in coupling the hydrolysis of ATP to the transfer of proteins into and across the cell membrane, serving both as a receptor for the preprotein-SecB complex and as an ATP-driven molecular motor driving the stepwise translocation of polypeptide chains across the membrane. The sequence is that of Protein translocase subunit SecA from Neisseria meningitidis serogroup A / serotype 4A (strain DSM 15465 / Z2491).